A 161-amino-acid polypeptide reads, in one-letter code: Nucleotide-binding protein BamMC406_2474 (161 aa).

It belongs to the YajQ family.

Its function is as follows. Nucleotide-binding protein. This Burkholderia ambifaria (strain MC40-6) protein is Nucleotide-binding protein BamMC406_2474.